A 247-amino-acid polypeptide reads, in one-letter code: Cell division protein ZapD (247 aa).

Belongs to the ZapD family. As to quaternary structure, interacts with FtsZ.

The protein localises to the cytoplasm. Functionally, cell division factor that enhances FtsZ-ring assembly. Directly interacts with FtsZ and promotes bundling of FtsZ protofilaments, with a reduction in FtsZ GTPase activity. The protein is Cell division protein ZapD of Salmonella arizonae (strain ATCC BAA-731 / CDC346-86 / RSK2980).